We begin with the raw amino-acid sequence, 141 residues long: Large-conductance mechanosensitive channel (141 aa).

A run of 2 helical transmembrane segments spans residues 21–41 (VGVIIGGAFGKIVDSIVGDLI) and 85–105 (GSFLTILVNFIILAFIIFMMV).

Belongs to the MscL family. In terms of assembly, homopentamer.

Its subcellular location is the cell inner membrane. Its function is as follows. Channel that opens in response to stretch forces in the membrane lipid bilayer. May participate in the regulation of osmotic pressure changes within the cell. This chain is Large-conductance mechanosensitive channel, found in Dechloromonas aromatica (strain RCB).